The primary structure comprises 407 residues: Keratin, type I cuticular Ha2 (407 aa).

Residues 1–55 (MPSVCMPTTYRPASCLSKTYLSSSCQPSNRRPTGCISSSMGTYGLFCEGAFNGNE) are head. One can recognise an IF rod domain in the interval 55–366 (EKETMQVLND…GLLESEDSKL (312 aa)). Positions 56 to 90 (KETMQVLNDRLANYLEKVRQLEKENAELEGKIQDV) are coil 1A. Residues 91–101 (YQGQVLTMCPD) form a linker 1 region. Residues 102–202 (YQSYFQTIEE…HEEEVGVLRQ (101 aa)) are coil 1B. Residues 203–218 (QLGDRLNIEVDAAPPV) are linker 12. Positions 219-362 (DLTRMLEEMR…DTYRGLLESE (144 aa)) are coil 2. The tract at residues 363 to 407 (DSKLPCNPCSTPSCQPCAPSPGVSRTVCVPHTVCVPCSPCLQTRY) is tail.

It belongs to the intermediate filament family. Cuticle of the hair shaft.

In Mus musculus (Mouse), this protein is Keratin, type I cuticular Ha2 (Krt32).